Reading from the N-terminus, the 287-residue chain is uncharacterized protein (287 aa).

Transmembrane regions (helical) follow at residues 12-32 (IILL…GAAL) and 217-237 (YTIG…VLIV).

It is found in the cell membrane. This is an uncharacterized protein from Mycoplasma pneumoniae (strain ATCC 29342 / M129 / Subtype 1) (Mycoplasmoides pneumoniae).